Here is a 229-residue protein sequence, read N- to C-terminus: Ribonuclease 3 (229 aa).

An RNase III domain is found at 5 to 127 (LDRLERKLGY…LIGAIYQDAD (123 aa)). Glutamate 40 is a binding site for Mg(2+). Residue aspartate 44 is part of the active site. Mg(2+) is bound by residues aspartate 113 and glutamate 116. Glutamate 116 is a catalytic residue. One can recognise a DRBM domain in the interval 154–224 (DPKTRLQEFL…AAAALIALGV (71 aa)).

Belongs to the ribonuclease III family. Homodimer. The cofactor is Mg(2+).

The protein localises to the cytoplasm. The catalysed reaction is Endonucleolytic cleavage to 5'-phosphomonoester.. Its function is as follows. Digests double-stranded RNA. Involved in the processing of primary rRNA transcript to yield the immediate precursors to the large and small rRNAs (23S and 16S). Processes some mRNAs, and tRNAs when they are encoded in the rRNA operon. Processes pre-crRNA and tracrRNA of type II CRISPR loci if present in the organism. This is Ribonuclease 3 from Pseudomonas entomophila (strain L48).